Reading from the N-terminus, the 466-residue chain is Asparagine--tRNA ligase (466 aa).

It belongs to the class-II aminoacyl-tRNA synthetase family. Homodimer.

The protein localises to the cytoplasm. It catalyses the reaction tRNA(Asn) + L-asparagine + ATP = L-asparaginyl-tRNA(Asn) + AMP + diphosphate + H(+). The polypeptide is Asparagine--tRNA ligase (Salmonella typhimurium (strain LT2 / SGSC1412 / ATCC 700720)).